The primary structure comprises 312 residues: Elongation factor Ts (312 aa).

The interval 80–83 (TDFV) is involved in Mg(2+) ion dislocation from EF-Tu.

Belongs to the EF-Ts family.

The protein resides in the cytoplasm. Associates with the EF-Tu.GDP complex and induces the exchange of GDP to GTP. It remains bound to the aminoacyl-tRNA.EF-Tu.GTP complex up to the GTP hydrolysis stage on the ribosome. In Paramagnetospirillum magneticum (strain ATCC 700264 / AMB-1) (Magnetospirillum magneticum), this protein is Elongation factor Ts.